The chain runs to 274 residues: MRVALGVSYNGQAYNGWQSQPSANTVQDRLEAALGRFATQEVHTICAGRTDAGVHGLMQVVHFDTELQRAPFSWVRGTNTFLPADIAVQWAQPVPDAFHSRACAVARRYAYVLLQSPVRPSVDAGRVGWVFHALDEQAMHKAVQHLLGEHDFTSFRASACQAKSPVKTLHRIDITRRAPPAGESTGTHGCVPCYWRFEFEGNAFLHHMIRNIMGCIVAIGQGLYPPEWMRTVLEARSRDAAAPTFSPDGLYFQGPVYGAEWGLPTRTAAYDWLP.

Residue Asp51 is the Nucleophile of the active site. Residue Tyr109 coordinates substrate.

This sequence belongs to the tRNA pseudouridine synthase TruA family. In terms of assembly, homodimer.

The catalysed reaction is uridine(38/39/40) in tRNA = pseudouridine(38/39/40) in tRNA. Its function is as follows. Formation of pseudouridine at positions 38, 39 and 40 in the anticodon stem and loop of transfer RNAs. This Acidovorax sp. (strain JS42) protein is tRNA pseudouridine synthase A.